A 386-amino-acid chain; its full sequence is 5-hydroxytryptamine receptor 1B (386 aa).

The Extracellular portion of the chain corresponds to 1–42 (MEEQGIQCAPPPPAASQTGVPLTNLSHNCSADGYIYQDSIAL). N-linked (GlcNAc...) asparagine glycans are attached at residues N24 and N28. A helical membrane pass occupies residues 43 to 68 (PWKVLLVALLALITLATTLSNAFVIA). At 69–82 (TVYRTRKLHTPANY) the chain is on the cytoplasmic side. A helical transmembrane segment spans residues 83–107 (LIASLAVTDLLVSILVMPISTMYTV). Residues 108–115 (TGRWTLGQ) lie on the Extracellular side of the membrane. The helical transmembrane segment at 116–141 (VVCDFWLSSDITCCTASIMHLCVIAL) threads the bilayer. C118 and C195 form a disulfide bridge. Residues D125 and T130 each contribute to the ergotamine site. The DRY motif; important for ligand-induced conformation changes and signaling signature appears at 142–144 (DRY). At 142-161 (DRYWAITDAVEYSAKRTPKR) the chain is on the cytoplasmic side. Residues 162–180 (AAIMIVLVWVFSISISLPP) form a helical membrane-spanning segment. At 181-201 (FFWRQAKAEEEMLDCFVNTDH) the chain is on the extracellular side. An ergotamine-binding site is contributed by V197. The chain crosses the membrane as a helical span at residues 202–225 (VLYTVYSTVGAFYLPTLLLIALYG). Topologically, residues 226–311 (RIYVEARSRI…AARERKATKT (86 aa)) are cytoplasmic. Over residues 255–268 (DSPGSTSSVTSINS) the composition is skewed to polar residues. The segment at 255 to 278 (DSPGSTSSVTSINSRAPDVPSESG) is disordered. A helical transmembrane segment spans residues 312-333 (LGIILGAFIVCWLPFFIISLVM). The Extracellular portion of the chain corresponds to 334–343 (PICKDACWFH). Residues 344 to 366 (MAIFDFFNWLGYLNSLINPIIYT) traverse the membrane as a helical segment. Residues 361–365 (NPIIY) carry the NPxxY motif; important for ligand-induced conformation changes and signaling motif. At 367 to 386 (MSNEDFKQAFHKLIRFKCAG) the chain is on the cytoplasmic side. The S-palmitoyl cysteine moiety is linked to residue C384.

This sequence belongs to the G-protein coupled receptor 1 family. Homodimer. Heterodimer with HTR1D. Post-translationally, phosphorylated. Desensitization of the receptor may be mediated by its phosphorylation. In terms of processing, palmitoylated. In terms of tissue distribution, predominantly expressed in striatum and Purkinje cells.

The protein localises to the cell membrane. Its function is as follows. G-protein coupled receptor for 5-hydroxytryptamine (serotonin). Also functions as a receptor for ergot alkaloid derivatives, various anxiolytic and antidepressant drugs and other psychoactive substances, such as lysergic acid diethylamide (LSD). Ligand binding causes a conformation change that triggers signaling via guanine nucleotide-binding proteins (G proteins) and modulates the activity of downstream effectors, such as adenylate cyclase. HTR1B is coupled to G(i)/G(o) G alpha proteins and mediates inhibitory neurotransmission by inhibiting adenylate cyclase activity. Arrestin family members inhibit signaling via G proteins and mediate activation of alternative signaling pathways. Regulates the release of 5-hydroxytryptamine, dopamine and acetylcholine in the brain, and thereby affects neural activity, nociceptive processing, pain perception, mood and behavior. Besides, plays a role in vasoconstriction of cerebral arteries. In Mus musculus (Mouse), this protein is 5-hydroxytryptamine receptor 1B (Htr1b).